Consider the following 239-residue polypeptide: Ribonuclease PH (239 aa).

Phosphate-binding positions include Arg87 and 125-127 (GTR).

It belongs to the RNase PH family. Homohexameric ring arranged as a trimer of dimers.

It carries out the reaction tRNA(n+1) + phosphate = tRNA(n) + a ribonucleoside 5'-diphosphate. Functionally, phosphorolytic 3'-5' exoribonuclease that plays an important role in tRNA 3'-end maturation. Removes nucleotide residues following the 3'-CCA terminus of tRNAs; can also add nucleotides to the ends of RNA molecules by using nucleoside diphosphates as substrates, but this may not be physiologically important. Probably plays a role in initiation of 16S rRNA degradation (leading to ribosome degradation) during starvation. This is Ribonuclease PH from Saccharophagus degradans (strain 2-40 / ATCC 43961 / DSM 17024).